The following is an 875-amino-acid chain: Serine/threonine-protein kinase D2 (875 aa).

Low complexity predominate over residues 1–12; it reads MAAAPSHPAGLP. Residues 1 to 35 are disordered; that stretch reads MAAAPSHPAGLPGSPGPGSPPPPGGLDLQSPPPLL. The span at 14-35 shows a compositional bias: pro residues; that stretch reads SPGPGSPPPPGGLDLQSPPPLL. Ser30 is modified (phosphoserine). Tyr87 carries the phosphotyrosine modification. The segment at 138 to 188 adopts a Phorbol-ester/DAG-type 1 zinc-finger fold; sequence PHALTVHSYRAPAFCDHCGEMLFGLVRQGLKCDGCGLNYHKRCAFSIPNNC. Ser197, Ser198, Ser200, Ser203, Ser206, Ser211, Ser212, and Ser214 each carry phosphoserine. The disordered stretch occupies residues 224 to 247; it reads RSTTDLLPRRPPSSSSSSSSSSFY. Low complexity predominate over residues 236–245; it reads SSSSSSSSSS. Position 244 is a phosphoserine; by CSNK1D and CSNK1E (Ser244). At Ser245 the chain carries Phosphoserine. The segment at 265–315 adopts a Phorbol-ester/DAG-type 2 zinc-finger fold; it reads PHTFLIHSYTRPTVCQACKKLLKGLFRQGLQCKDCKFNCHKRCATRVPNDC. The segment at 332 to 374 is disordered; that stretch reads DYSEADKSSISDELEDSGVIPGSHSESALHASEEEEGEGHKAQ. A PH domain is found at 398–510; it reads TTLREGWVVH…WETAIRQALM (113 aa). At Tyr408 the chain carries Phosphotyrosine. Phosphotyrosine; by ABL1 is present on Tyr439. Ser519 carries the post-translational modification Phosphoserine. The 257-residue stretch at 552-808 folds into the Protein kinase domain; the sequence is IFPDEVLGSG…VDKSLSHPWL (257 aa). ATP is bound by residues 558 to 566 and Lys581; that span reads LGSGQFGVV. Asp675 serves as the catalytic Proton acceptor. Ser707 carries the phosphoserine; by PKC modification. Residue Ser711 is modified to Phosphoserine; by autocatalysis. Tyr718 is subject to Phosphotyrosine; by ABL1. Residues 725–727 carry the Important for ABL1-mediated Tyr-718 phosphorylation motif; the sequence is LNQ. Ser873 bears the Phosphoserine; by autocatalysis mark.

The protein belongs to the protein kinase superfamily. CAMK Ser/Thr protein kinase family. PKD subfamily. In terms of assembly, interacts (via C-terminus) with LCK. Interacts (via N-terminus and zing-finger domain 1 and 2) with PRKCD in response to oxidative stress; the interaction is independent of PRKD2 tyrosine phosphorylation. Mg(2+) is required as a cofactor. Phosphorylation of Ser-873 correlates with the activation status of the kinase. Ser-707 is probably phosphorylated by PKC. Phosphorylation at Ser-244 by CSNK1D and CSNK1E promotes nuclear localization and substrate targeting. Phosphorylation at Ser-244, Ser-707 and Ser-711 is required for nuclear localization. Phosphorylated at Tyr-438 by ABL1 in response to oxidative stress. Phosphorylated at Tyr-718 by ABL1 specifically in response to oxidative stress; requires prior phosphorylation at Ser-707 or/and Ser-711.

The protein resides in the cytoplasm. It is found in the cell membrane. Its subcellular location is the golgi apparatus. The protein localises to the trans-Golgi network. It carries out the reaction L-seryl-[protein] + ATP = O-phospho-L-seryl-[protein] + ADP + H(+). The enzyme catalyses L-threonyl-[protein] + ATP = O-phospho-L-threonyl-[protein] + ADP + H(+). Activated by DAG and phorbol esters. Phorbol-ester/DAG-type domains bind DAG, mediating translocation to membranes. Autophosphorylation of Ser-711 and phosphorylation of Ser-707 by PKC relieves auto-inhibition by the PH domain. Catalytic activity is further increased by phosphorylation at Tyr-718 in response to oxidative stress. Serine/threonine-protein kinase that converts transient diacylglycerol (DAG) signals into prolonged physiological effects downstream of PKC, and is involved in the regulation of cell proliferation via MAPK1/3 (ERK1/2) signaling, oxidative stress-induced NF-kappa-B activation, inhibition of HDAC7 transcriptional repression, signaling downstream of T-cell antigen receptor (TCR) and cytokine production, and plays a role in Golgi membrane trafficking, angiogenesis, secretory granule release and cell adhesion. May potentiate mitogenesis induced by the neuropeptide bombesin by mediating an increase in the duration of MAPK1/3 (ERK1/2) signaling, which leads to accumulation of immediate-early gene products including FOS that stimulate cell cycle progression. In response to oxidative stress, is phosphorylated at Tyr-438 and Tyr-718 by ABL1, which leads to the activation of PRKD2 without increasing its catalytic activity, and mediates activation of NF-kappa-B. In response to the activation of the gastrin receptor CCKBR, is phosphorylated at Ser-244 by CSNK1D and CSNK1E, translocates to the nucleus, phosphorylates HDAC7, leading to nuclear export of HDAC7 and inhibition of HDAC7 transcriptional repression of NR4A1/NUR77. Upon TCR stimulation, is activated independently of ZAP70, translocates from the cytoplasm to the nucleus and is required for interleukin-2 (IL2) promoter up-regulation. During adaptive immune responses, is required in peripheral T-lymphocytes for the production of the effector cytokines IL2 and IFNG after TCR engagement and for optimal induction of antibody responses to antigens. In epithelial cells stimulated with lysophosphatidic acid (LPA), is activated through a PKC-dependent pathway and mediates LPA-stimulated interleukin-8 (IL8) secretion via a NF-kappa-B-dependent pathway. During TCR-induced T-cell activation, interacts with and is activated by the tyrosine kinase LCK, which results in the activation of the NFAT transcription factors. In the trans-Golgi network (TGN), regulates the fission of transport vesicles that are on their way to the plasma membrane and in polarized cells is involved in the transport of proteins from the TGN to the basolateral membrane. Plays an important role in endothelial cell proliferation and migration prior to angiogenesis, partly through modulation of the expression of KDR/VEGFR2 and FGFR1, two key growth factor receptors involved in angiogenesis. In secretory pathway, is required for the release of chromogranin-A (CHGA)-containing secretory granules from the TGN. Downstream of PRKCA, plays important roles in angiotensin-2-induced monocyte adhesion to endothelial cells. The chain is Serine/threonine-protein kinase D2 (Prkd2) from Mus musculus (Mouse).